The primary structure comprises 120 residues: Crustacean hyperglycemic hormones 2 (120 aa).

The first 27 residues, 1-27, serve as a signal peptide directing secretion; that stretch reads MIAFHMVWSALLASLLLLLLAPSASPV. Cystine bridges form between Cys-53–Cys-89, Cys-69–Cys-85, and Cys-72–Cys-98. Val-118 is subject to Valine amide.

This sequence belongs to the arthropod CHH/MIH/GIH/VIH hormone family.

It is found in the secreted. Its function is as follows. Hormone found in the sinus gland of isopods and decapods which controls the blood sugar level. Has a secretagogue action over the amylase released from the midgut gland. May act as a stress hormone and may be involved in the control of molting and reproduction. The chain is Crustacean hyperglycemic hormones 2 from Penaeus japonicus (Kuruma prawn).